We begin with the raw amino-acid sequence, 257 residues long: Thiazole synthase (257 aa).

The active-site Schiff-base intermediate with DXP is the Lys-98. 1-deoxy-D-xylulose 5-phosphate is bound by residues Gly-159, 185-186, and 207-208; these read AG and NT.

The protein belongs to the ThiG family. In terms of assembly, homotetramer. Forms heterodimers with either ThiH or ThiS.

It localises to the cytoplasm. The catalysed reaction is [ThiS sulfur-carrier protein]-C-terminal-Gly-aminoethanethioate + 2-iminoacetate + 1-deoxy-D-xylulose 5-phosphate = [ThiS sulfur-carrier protein]-C-terminal Gly-Gly + 2-[(2R,5Z)-2-carboxy-4-methylthiazol-5(2H)-ylidene]ethyl phosphate + 2 H2O + H(+). Its pathway is cofactor biosynthesis; thiamine diphosphate biosynthesis. In terms of biological role, catalyzes the rearrangement of 1-deoxy-D-xylulose 5-phosphate (DXP) to produce the thiazole phosphate moiety of thiamine. Sulfur is provided by the thiocarboxylate moiety of the carrier protein ThiS. In vitro, sulfur can be provided by H(2)S. This chain is Thiazole synthase, found in Anaeromyxobacter dehalogenans (strain 2CP-1 / ATCC BAA-258).